Reading from the N-terminus, the 101-residue chain is NAD(P)H-quinone oxidoreductase subunit 4L (101 aa).

3 consecutive transmembrane segments (helical) span residues 3–23, 30–50, and 64–84; these read LQYF…GLVT, VLMS…AFSN, and IFVI…VLAI.

Belongs to the complex I subunit 4L family. As to quaternary structure, NDH-1 can be composed of about 15 different subunits; different subcomplexes with different compositions have been identified which probably have different functions.

The protein localises to the cellular thylakoid membrane. It catalyses the reaction a plastoquinone + NADH + (n+1) H(+)(in) = a plastoquinol + NAD(+) + n H(+)(out). It carries out the reaction a plastoquinone + NADPH + (n+1) H(+)(in) = a plastoquinol + NADP(+) + n H(+)(out). In terms of biological role, NDH-1 shuttles electrons from an unknown electron donor, via FMN and iron-sulfur (Fe-S) centers, to quinones in the respiratory and/or the photosynthetic chain. The immediate electron acceptor for the enzyme in this species is believed to be plastoquinone. Couples the redox reaction to proton translocation, and thus conserves the redox energy in a proton gradient. Cyanobacterial NDH-1 also plays a role in inorganic carbon-concentration. The chain is NAD(P)H-quinone oxidoreductase subunit 4L from Leptolyngbya boryana (Plectonema boryanum).